A 441-amino-acid polypeptide reads, in one-letter code: Ribulose bisphosphate carboxylase large chain (441 aa).

Substrate is bound by residues Asn89 and Thr139. The active-site Proton acceptor is the Lys141. Lys143 provides a ligand contact to substrate. Lys167, Asp169, and Glu170 together coordinate Mg(2+). Lys167 is subject to N6-carboxylysine. The active-site Proton acceptor is His260. Substrate is bound by residues Arg261, His293, and Ser345.

This sequence belongs to the RuBisCO large chain family. Type I subfamily. As to quaternary structure, heterohexadecamer of 8 large chains and 8 small chains; disulfide-linked. The disulfide link is formed within the large subunit homodimers. Mg(2+) is required as a cofactor. The disulfide bond which can form in the large chain dimeric partners within the hexadecamer appears to be associated with oxidative stress and protein turnover.

The protein localises to the plastid. It localises to the chloroplast. It carries out the reaction 2 (2R)-3-phosphoglycerate + 2 H(+) = D-ribulose 1,5-bisphosphate + CO2 + H2O. The enzyme catalyses D-ribulose 1,5-bisphosphate + O2 = 2-phosphoglycolate + (2R)-3-phosphoglycerate + 2 H(+). Its function is as follows. RuBisCO catalyzes two reactions: the carboxylation of D-ribulose 1,5-bisphosphate, the primary event in carbon dioxide fixation, as well as the oxidative fragmentation of the pentose substrate in the photorespiration process. Both reactions occur simultaneously and in competition at the same active site. This is Ribulose bisphosphate carboxylase large chain from Fouquieria splendens (Ocotillo).